A 20-amino-acid polypeptide reads, in one-letter code: GCPQTPRCTNYAEKGQCPPN.

The protein resides in the secreted. In terms of biological role, displays antimicrobial activity against the Gram-negative bacterium A.hydrophila. The polypeptide is Antimicrobial peptide AJN-10 (Anguilla japonica (Japanese eel)).